The sequence spans 343 residues: Ribosomal RNA small subunit methyltransferase C (343 aa).

Belongs to the methyltransferase superfamily. RsmC family. Monomer.

The protein resides in the cytoplasm. It carries out the reaction guanosine(1207) in 16S rRNA + S-adenosyl-L-methionine = N(2)-methylguanosine(1207) in 16S rRNA + S-adenosyl-L-homocysteine + H(+). Specifically methylates the guanine in position 1207 of 16S rRNA in the 30S particle. The polypeptide is Ribosomal RNA small subunit methyltransferase C (Escherichia coli O7:K1 (strain IAI39 / ExPEC)).